The sequence spans 1091 residues: Error-prone DNA polymerase 1 (1091 aa).

A compositionally biased stretch (basic and acidic residues) spans 1051 to 1064 (RGDEFHHGMPDDHR). The segment at 1051–1080 (RGDEFHHGMPDDHRAIRKRPPPSNHDDDEV) is disordered.

The protein belongs to the DNA polymerase type-C family. DnaE2 subfamily.

Its subcellular location is the cytoplasm. It carries out the reaction DNA(n) + a 2'-deoxyribonucleoside 5'-triphosphate = DNA(n+1) + diphosphate. Its function is as follows. DNA polymerase involved in damage-induced mutagenesis and translesion synthesis (TLS). It is not the major replicative DNA polymerase. The sequence is that of Error-prone DNA polymerase 1 from Agrobacterium fabrum (strain C58 / ATCC 33970) (Agrobacterium tumefaciens (strain C58)).